Consider the following 399-residue polypeptide: Elongation factor Tu 2 (399 aa).

Positions 10–209 (KPHVNIGTIG…QVDGYIPEPE (200 aa)) constitute a tr-type G domain. The segment at 19–26 (GHVDHGKT) is G1. Residue 19–26 (GHVDHGKT) participates in GTP binding. Threonine 26 lines the Mg(2+) pocket. Positions 60–64 (GITIA) are G2. A G3 region spans residues 81 to 84 (DCPG). GTP is bound by residues 81–85 (DCPGH) and 136–139 (NKAD). A G4 region spans residues 136-139 (NKAD). The segment at 174–176 (SAL) is G5.

This sequence belongs to the TRAFAC class translation factor GTPase superfamily. Classic translation factor GTPase family. EF-Tu/EF-1A subfamily. Monomer.

It localises to the cytoplasm. It carries out the reaction GTP + H2O = GDP + phosphate + H(+). GTP hydrolase that promotes the GTP-dependent binding of aminoacyl-tRNA to the A-site of ribosomes during protein biosynthesis. The protein is Elongation factor Tu 2 of Syntrophotalea carbinolica (strain DSM 2380 / NBRC 103641 / GraBd1) (Pelobacter carbinolicus).